Here is a 391-residue protein sequence, read N- to C-terminus: Probable sugar efflux transporter (391 aa).

Transmembrane regions (helical) follow at residues 16–36, 51–71, 82–102, 110–130, 138–158, 170–190, 210–230, 247–267, 277–297, 300–320, 338–358, and 361–381; these read VFVFSLSAFIFNTTEFVPVAL, VGLMITAYAWVVSLGSLPLML, LLFLFALFIFSHILSALAWNF, MGIAFAHSIFWSITASLVIRV, QALGLLALGSSLAMILGLPLG, TFGVIGGVATLIMLLMWKLLP, PLLVGIYLLVIMVISGHFTTY, ITTLMLFVFGLAGVVGSFLFG, FIAFAMVLVICPQLLLFVFKN, WVIFLQIFLWGIGITSLTIAL, IFSGSYNVGIGSGALFGSIVI, and LGLEYIGFVGGALGLLALFWL.

Belongs to the major facilitator superfamily. SotB (TC 2.A.1.2) family.

It is found in the cell inner membrane. Functionally, involved in the efflux of sugars. The physiological role may be the reduction of the intracellular concentration of toxic sugars or sugar metabolites. The chain is Probable sugar efflux transporter from Helicobacter pylori (strain J99 / ATCC 700824) (Campylobacter pylori J99).